We begin with the raw amino-acid sequence, 632 residues long: tRNA uridine 5-carboxymethylaminomethyl modification enzyme MnmG (632 aa).

FAD is bound by residues 15–20, valine 127, and serine 182; that span reads GAGHAG. 276–290 serves as a coordination point for NAD(+); the sequence is GARYCPSIEDKIVRF. Glutamine 373 is an FAD binding site.

The protein belongs to the MnmG family. As to quaternary structure, homodimer. Heterotetramer of two MnmE and two MnmG subunits. The cofactor is FAD.

It localises to the cytoplasm. NAD-binding protein involved in the addition of a carboxymethylaminomethyl (cmnm) group at the wobble position (U34) of certain tRNAs, forming tRNA-cmnm(5)s(2)U34. The protein is tRNA uridine 5-carboxymethylaminomethyl modification enzyme MnmG of Enterococcus faecalis (strain ATCC 700802 / V583).